Consider the following 524-residue polypeptide: Putative UDP-glucuronosyltransferase ugt-56 (524 aa).

The first 20 residues, 1-20, serve as a signal peptide directing secretion; the sequence is MLWAFIVWLGALCIYGSAFD. N-linked (GlcNAc...) asparagine glycosylation is found at asparagine 125, asparagine 277, and asparagine 335. A helical transmembrane segment spans residues 488-508; it reads LIDSSIALVFMLFIFVFVNHF.

It belongs to the UDP-glycosyltransferase family.

The protein resides in the membrane. The enzyme catalyses glucuronate acceptor + UDP-alpha-D-glucuronate = acceptor beta-D-glucuronoside + UDP + H(+). This Caenorhabditis elegans protein is Putative UDP-glucuronosyltransferase ugt-56 (ugt-56).